Reading from the N-terminus, the 175-residue chain is Inosine/xanthosine triphosphatase (175 aa).

Position 8 to 13 (8 to 13) interacts with substrate; sequence TTNPAK. Mg(2+)-binding residues include aspartate 38 and glutamate 68. Position 68-69 (68-69) interacts with substrate; sequence EA.

Belongs to the YjjX NTPase family. Homodimer. Mg(2+) is required as a cofactor. The cofactor is Mn(2+).

It catalyses the reaction XTP + H2O = XDP + phosphate + H(+). The enzyme catalyses ITP + H2O = IDP + phosphate + H(+). Functionally, phosphatase that hydrolyzes non-canonical purine nucleotides such as XTP and ITP to their respective diphosphate derivatives. Probably excludes non-canonical purines from DNA/RNA precursor pool, thus preventing their incorporation into DNA/RNA and avoiding chromosomal lesions. In Yersinia enterocolitica serotype O:8 / biotype 1B (strain NCTC 13174 / 8081), this protein is Inosine/xanthosine triphosphatase.